Here is a 158-residue protein sequence, read N- to C-terminus: Small ribosomal subunit protein uS7 (158 aa).

Belongs to the universal ribosomal protein uS7 family. In terms of assembly, part of the 30S ribosomal subunit. Contacts proteins S9 and S11.

Functionally, one of the primary rRNA binding proteins, it binds directly to 16S rRNA where it nucleates assembly of the head domain of the 30S subunit. Is located at the subunit interface close to the decoding center, probably blocks exit of the E-site tRNA. The chain is Small ribosomal subunit protein uS7 from Gluconacetobacter diazotrophicus (strain ATCC 49037 / DSM 5601 / CCUG 37298 / CIP 103539 / LMG 7603 / PAl5).